Consider the following 125-residue polypeptide: UPF0738 protein GTNG_0708 (125 aa).

This sequence belongs to the UPF0738 family.

The polypeptide is UPF0738 protein GTNG_0708 (Geobacillus thermodenitrificans (strain NG80-2)).